The sequence spans 470 residues: Glutamate--tRNA ligase (470 aa).

The 'HIGH' region motif lies at 9–19; it reads PSPTGFLHVGG. The 'KMSKS' region motif lies at 236–240; the sequence is KLSKR. Position 239 (Lys239) interacts with ATP.

It belongs to the class-I aminoacyl-tRNA synthetase family. Glutamate--tRNA ligase type 1 subfamily. Monomer.

It localises to the cytoplasm. The enzyme catalyses tRNA(Glu) + L-glutamate + ATP = L-glutamyl-tRNA(Glu) + AMP + diphosphate. Functionally, catalyzes the attachment of glutamate to tRNA(Glu) in a two-step reaction: glutamate is first activated by ATP to form Glu-AMP and then transferred to the acceptor end of tRNA(Glu). The chain is Glutamate--tRNA ligase from Psychromonas ingrahamii (strain DSM 17664 / CCUG 51855 / 37).